We begin with the raw amino-acid sequence, 72 residues long: Small ribosomal subunit protein bS20 (72 aa).

This sequence belongs to the bacterial ribosomal protein bS20 family.

Binds directly to 16S ribosomal RNA. The sequence is that of Small ribosomal subunit protein bS20 (rpsT) from Proteus mirabilis.